We begin with the raw amino-acid sequence, 317 residues long: tRNA dimethylallyltransferase (317 aa).

14–21 contributes to the ATP binding site; it reads GPTAVGKT. 16-21 contributes to the substrate binding site; it reads TAVGKT. The interval 39-42 is interaction with substrate tRNA; that stretch reads DSMQ.

Belongs to the IPP transferase family. As to quaternary structure, monomer. Requires Mg(2+) as cofactor.

It carries out the reaction adenosine(37) in tRNA + dimethylallyl diphosphate = N(6)-dimethylallyladenosine(37) in tRNA + diphosphate. Its function is as follows. Catalyzes the transfer of a dimethylallyl group onto the adenine at position 37 in tRNAs that read codons beginning with uridine, leading to the formation of N6-(dimethylallyl)adenosine (i(6)A). The polypeptide is tRNA dimethylallyltransferase (Bacillus cereus (strain ATCC 14579 / DSM 31 / CCUG 7414 / JCM 2152 / NBRC 15305 / NCIMB 9373 / NCTC 2599 / NRRL B-3711)).